Consider the following 84-residue polypeptide: Gas vesicle protein M1 (84 aa).

Residues 1-25 form an interacts with GvpL1 region; the sequence is MEPTKDETHAIVEFVDVLLRDGAVI. Positions 5–21 are alpha helix 1; sequence KDETHAIVEFVDVLLRD. 2 beta-strand regions span residues 27–29 and 41–43; these read ADV and ISL. The Conserved in GvpJ1/2 but not GvpA signature appears at 44–48; the sequence is RAAIA. Alpha helix regions lie at residues 46 to 56 and 62 to 84; these read AIAGMTTMTEY and WDAA…RRED.

This sequence belongs to the gas vesicle GvpA family. GvpF to GvpM interact with each other in vitro, and may form multi-subunit complex(es). Might interact with GvpA1.

Its subcellular location is the gas vesicle. Its function is as follows. Proteins GvpF to GvpM might be involved in nucleating gas vesicle formation. A minor component of the gas vesicle. Gas vesicles are hollow, gas filled proteinaceous nanostructures found in several microbial planktonic microorganisms. They allow positioning of halobacteria at the optimal depth for growth in the poorly aerated, shallow brine pools of their habitat. Expression of a 9.5 kb p-vac DNA fragment containing 2 divergently transcribed regions (gvpD-gvpE-gvpF-gvpG-gvpH-gvpI-gvpJ-gvpK-gvpL-gvpM and gvpA-gvpC-gvpN-gvpO) allows H.volcanii to produce gas vesicles. All site-directed mutagenesis is tested in H.volcanii. A minimal gas vesicle can be made in H.volcanii by gvpA1-gvpO1 plus gvpF1-gvpG1-gvpJ1-gvpK1-gvpL1-gvpM1; lack of enough GvpJ1 prevents formation. A similar region restores gas vesicle production in H.halobium without the p-vac locus, but it still has the c-vac locus. The chain is Gas vesicle protein M1 (gvpM11) from Halobacterium salinarum (strain ATCC 700922 / JCM 11081 / NRC-1) (Halobacterium halobium).